The primary structure comprises 31 residues: Cyclotide vpub-B (31 aa).

The segment at residues 1–31 (GIIPCGESCVFIPCITSVVGCSCKSKVCYKN) is a cross-link (cyclopeptide (Gly-Asn)). 3 disulfide bridges follow: cysteine 5-cysteine 21, cysteine 9-cysteine 23, and cysteine 14-cysteine 28.

Belongs to the cyclotide family. Bracelet subfamily. This is a cyclic peptide.

Probably participates in a plant defense mechanism. This chain is Cyclotide vpub-B, found in Viola pubescens (Downy yellow violet).